The primary structure comprises 507 residues: Histone-lysine N-methyltransferase set-18 (507 aa).

The Zn(2+) site is built by C49, C52, C65, C68, C74, C78, H86, and C90. The MYND-type zinc-finger motif lies at 49–90 (CANCLRGPAPGEKLLRCGGCNFSMYCSKECQATAWLVHKPEC).

It belongs to the class V-like SAM-binding methyltransferase superfamily. Histone-lysine methyltransferase family. Expressed in pharyngeal and body wall muscles.

The enzyme catalyses L-lysyl(36)-[histone H3] + 2 S-adenosyl-L-methionine = N(6),N(6)-dimethyl-L-lysyl(36)-[histone H3] + 2 S-adenosyl-L-homocysteine + 2 H(+). Its function is as follows. Histone methyltransferase. Specifically methylates 'Lys-36' of histone H3, inducing di-methylation. Plays a role in modulating lifespan and oxidative stress resistance, in a manner dependent upon daf-16/Forkhead box protein O and the Insulin/IGF-1-like signaling (IIS) mediated pathway. Represses transcription of daf-16 isoform a, perhaps by methylating histone H3 at the daf-16 promoter, which in turn leads to recruitment of histone deacetylases and thus modulation of expression. The protein is Histone-lysine N-methyltransferase set-18 of Caenorhabditis elegans.